The chain runs to 519 residues: Transcription factor IIIB 50 kDa subunit (519 aa).

The TFIIB-type zinc-finger motif lies at 3 to 36 (GAKQCPDCGSSDIVEDAHYSQDQVVCADCGCILS). Zn(2+) contacts are provided by C7, C10, C28, and C31. Copy 2 of the repeat occupies 173–249 (VMSHCRSFKL…ARRLSCSLSR (77 aa)). C462 is subject to Cysteine sulfenic acid (-SOH). A disordered region spans residues 465–487 (NPRKRSRSIPFPRGHLDITGDED).

It belongs to the TFIIB family. In terms of assembly, component of TFIIIB complexes. Interacts with TBP and forms a ternary complex with TBp and target DNA sequences. Post-translationally, in response to oxidative stress, a Cys-residue is reversibly oxidized to cysteine sulfenic acid. This impairs formation of a ternary complex with TBP and DNA and down-regulates expression of target genes in response to oxidative stress.

The protein localises to the nucleus. In terms of biological role, general activator of RNA polymerase III transcription. Factor exclusively required for RNA polymerase III transcription of genes with promoter elements upstream of the initiation sites. Contributes to the regulation of gene expression; functions as activator in the absence of oxidative stress. Down-regulates expression of target genes in response to oxidative stress. Overexpression protects cells against apoptosis in response to oxidative stress. The sequence is that of Transcription factor IIIB 50 kDa subunit (brf2) from Xenopus tropicalis (Western clawed frog).